Reading from the N-terminus, the 314-residue chain is MTTILDNFQRAEKIGEGTYGIVYKARSNSTGQDVALKKIRLEGETEGVPSTAIREISLLKNLKHPNVVQLFDVVISGNNLYMIFEYLNMDLKKLMDKKKDVFTPQLIKSYMHQILDAVGFCHTNRILHRDLKPQNLLVDTAGKIKLADFGLARAFNVPMRAYTHEVVTLWYRAPEILLGTKFYSTGVDIWSLGCIFSEMIMRRSLFPGDSEIDQLYRIFRTLSTPDETNWPGVTQLPDFKTKFPRWEGTNMPQPITEHEAHELIMSMLCYDPNLRISAKDALQHAYFRNVQHVDHVALPVDPNAGSASRLTRLV.

One can recognise a Protein kinase domain in the interval 8–287 (FQRAEKIGEG…AKDALQHAYF (280 aa)). ATP contacts are provided by residues 14–22 (IGEGTYGIV) and lysine 37. Threonine 18 carries the phosphothreonine modification. The residue at position 19 (tyrosine 19) is a Phosphotyrosine. The Proton acceptor role is filled by aspartate 130. Phosphotyrosine is present on tyrosine 162. Threonine 163 is modified (phosphothreonine).

The protein belongs to the protein kinase superfamily. CMGC Ser/Thr protein kinase family. CDC2/CDKX subfamily. In terms of assembly, interacts with cyclin CycG.

It catalyses the reaction L-seryl-[protein] + ATP = O-phospho-L-seryl-[protein] + ADP + H(+). The catalysed reaction is L-threonyl-[protein] + ATP = O-phospho-L-threonyl-[protein] + ADP + H(+). It carries out the reaction [DNA-directed RNA polymerase] + ATP = phospho-[DNA-directed RNA polymerase] + ADP + H(+). Its function is as follows. Like Cdk1, could play a key role in the control of the eukaryotic cell cycle. This Drosophila melanogaster (Fruit fly) protein is Cyclin-dependent kinase 2.